A 701-amino-acid polypeptide reads, in one-letter code: MASEDTLSSNPLLQNFDFPPFDSVDAHHVRPGIRALLQQLEAELEQLEKAVEPSWPKLVEPLEKIIDRLSVVWGMINHLKAVKDTPELRAAIEEVQPEKVKFQLRLGQSKPIYNAFKAIRESPDWNSLSEARQRLVEAQIKEAVLSGIALEDDKREEFNKIEQELEKLSHKFSENVLDATKKFEKLITDKKEIEGLPPSALGLFAQAAVSKGHETATADTGPWLITLDAPSYLPVMQHAKNRALREEVYRAYLSRASSGDLDNTAIIDQILKLRLEKAKLLGYRNYAEVSMATKMATVEKADELLEKLRSASWDPAVQDIEDLKSFAKNQGAAEADSLTHWDITFWSERLRESKYDINEEELRPYFSLPKVMDALFGLAKTLFGIDVVPADGVAPVWNSDVRFYCVKDSSGNPTAYFYFDPYSRPSEKRDGAWMDEVFSRSRVMAQKGSSVRLPVAQMVCNQTPPVGDKPSLMTFREVETVFHEFGHALQHMLTKEDEGLVAGIRNIEWDAVELPSQFMENWCYHRDTLMSIAKHYQTGETLPENVYKKLLAARTFRAGSLSLRQLKFATVDLELHTKYMPGGAETIYEVDQRVSIKTQVIPPLPEDRFLCSFSHIFAGGYAAGYYSYKWAEVLSADAFSAFEDAGLDDIKAVKETGQRFRNTILALGGGKAPLKVFVEFRGREPSPEPLLRHNGLLAASA.

Ala2 carries the N-acetylalanine modification. The stretch at Ile148–Glu194 forms a coiled coil. Residue His483 coordinates Zn(2+). Glu484 is an active-site residue. Zn(2+) is bound by residues His487 and Glu513. His615–Tyr621 contributes to the substrate binding site.

The protein belongs to the peptidase M3 family. It depends on Zn(2+) as a cofactor.

The protein resides in the cytoplasm. It localises to the cytosol. The enzyme catalyses Hydrolysis of oligopeptides, with broad specificity. Gly or Ala commonly occur as P1 or P1' residues, but more distant residues are also important, as is shown by the fact that Z-Gly-Pro-Gly-|-Gly-Pro-Ala is cleaved, but not Z-(Gly)(5).. Inhibited by salicylic acid. Its function is as follows. Oligopeptidase that may be involved in the degradation of proteasome-generated peptides. Binds salicylic acid. In Arabidopsis thaliana (Mouse-ear cress), this protein is Probable cytosolic oligopeptidase A.